A 987-amino-acid polypeptide reads, in one-letter code: MGPLWFCCLPLALLPLLAAVEETLMDSTTATAELGWMVHPPSGWEEVSGYDENMNTIRTYQVCNVFESSQNNWLRTKYIRRRGAHRIHVEMKFSVRDCSSIPNVPGSCKETFNLYYYESDFDSATKTFPNWMENPWMKVDTIAADERFSQVDLGGRVMKINTEVRSFGPVSKNGFYLAFQDYWGCMSLIAVRVFYRKCPRVIQNGADFQETLSGAESTSLVASRGTCINKAEEVDVPIKQHCNGDGEWLVPIGRCMCRPGYESVANGTVCRGCPSGTFKASQGDEGCVHCPINSRTTSEGATNCVCRNGYYRADADPVDMPCTTIPSAPQSVISSVNETSLMLEWTPPRDSGGREDLVYNIICKSCGSGRGACTRCGDNVQFAPRQLGLTEPRIYISDLLAHTQYTFEIQAVNGVTDQSPFSPQFASVNITTNQAAPSAVSIMHQVSRTVDSITLSWSQPDQPNGVILDYELQYYEKNLSELNSTAVKSPTNTVTVQNLKAGTIYVFQVRARTVAGYGRYSGKMYFQTMTEAEYQTSVQEKLPLIIGSSAAGLVFLIAVVVIIIVCNRRGFERADSEYTDKLQHYTSGHMTPGMKIYIDPFTYEDPNEAVREFAKEIDISCVKIEQVIGAGEFGEVCSGHLKLPGKREIFVAIKTLKSGYTEKQRRDFLSEASIMGQFDHPNVIHLEGVVTKSSPVMIITEFMENGSLDSFLRQNDGQFTVIQLVGMLRGIAAGMKYLADMNYVHRDLAARNTLVNSNLVCKVSDFGLSRFLEDDTSDPTYTSALGGKIPIRWTAPEAIQYRKFTSASDVWSYGIVMWEVMSYGERPYWDMTNQDVINAIEQDYRLPPPMDCPNALHQLMLDCWQKDRNHRPKFGQIVNTLDKMIRNPNSLKAMAPLSSGVNLPLLDRTIPDYTSFNTVDEWLDAIKMSQYKESYASAGFTTFDIVSQMTVEDILRVGVTLAGHQKKILNSIQVMRAQMNQIQSVEV.

An N-terminal signal peptide occupies residues 1–19 (MGPLWFCCLPLALLPLLAA). The Extracellular portion of the chain corresponds to 20–544 (VEETLMDSTT…QTSVQEKLPL (525 aa)). In terms of domain architecture, Eph LBD spans 21–203 (EETLMDSTTA…FYRKCPRVIQ (183 aa)). Intrachain disulfides connect Cys-63-Cys-185 and Cys-98-Cys-108. N-linked (GlcNAc...) asparagine glycans are attached at residues Asn-266, Asn-337, Asn-429, Asn-478, and Asn-483. Fibronectin type-III domains follow at residues 325-435 (IPSA…TNQA) and 436-531 (APSA…TMTE). Residues 545–565 (IIGSSAAGLVFLIAVVVIIIV) form a helical membrane-spanning segment. Residues 566-987 (CNRRGFERAD…QMNQIQSVEV (422 aa)) lie on the Cytoplasmic side of the membrane. Residues 622-885 (VKIEQVIGAG…QIVNTLDKMI (264 aa)) enclose the Protein kinase domain. ATP contacts are provided by residues 628 to 636 (IGAGEFGEV) and Lys-654. Residue Asp-747 is the Proton acceptor of the active site. Residue Lys-892 forms a Glycyl lysine isopeptide (Lys-Gly) (interchain with G-Cter in ubiquitin) linkage. The SAM domain occupies 914 to 978 (TSFNTVDEWL…LNSIQVMRAQ (65 aa)). Positions 985 to 987 (VEV) match the PDZ-binding motif.

This sequence belongs to the protein kinase superfamily. Tyr protein kinase family. Ephrin receptor subfamily. As to quaternary structure, heterotetramer upon binding of the ligand. The heterotetramer is composed of an ephrin dimer and a receptor dimer. Oligomerization is probably required to induce biological responses. Ligand binding induces cleavage by matrix metalloproteinases (MMPs) such as MMP7/MMP9, producing an EphB2/N-terminal fragment (NTF) and a C-terminal long fragment (EphB2-LF). EphB2-LF is further cleaved by MMPs, producing EphB2/CTF1 which is further cleaved by the PS1/gamma-secretase producing EphB2/CTF2. Post-translationally, polyubiquitinated; ligand binding stimulates ubiquitination. Ubiquitinated by RNF186 at Lys-892, mainly through 'Lys-27'-linked polyubiquitin chains.

It localises to the cell membrane. The protein localises to the cell projection. It is found in the axon. The protein resides in the dendrite. It carries out the reaction L-tyrosyl-[protein] + ATP = O-phospho-L-tyrosyl-[protein] + ADP + H(+). In terms of biological role, receptor tyrosine kinase which binds promiscuously transmembrane ephrin-B family ligands residing on adjacent cells, leading to contact-dependent bidirectional signaling into neighboring cells. The signaling pathway downstream of the receptor is referred to as forward signaling while the signaling pathway downstream of the ephrin ligand is referred to as reverse signaling. Functions in axon guidance during development. In addition to axon guidance, also regulates dendritic spines development and maturation and stimulates the formation of excitatory synapses. The polypeptide is Ephrin type-B receptor 2 (EPHB2) (Coturnix japonica (Japanese quail)).